Here is a 256-residue protein sequence, read N- to C-terminus: Thiazole synthase (256 aa).

Lys-96 (schiff-base intermediate with DXP) is an active-site residue. Residues Gly-157, 184 to 185 (AG), and 206 to 207 (NT) contribute to the 1-deoxy-D-xylulose 5-phosphate site.

It belongs to the ThiG family. In terms of assembly, homotetramer. Forms heterodimers with either ThiH or ThiS.

Its subcellular location is the cytoplasm. It catalyses the reaction [ThiS sulfur-carrier protein]-C-terminal-Gly-aminoethanethioate + 2-iminoacetate + 1-deoxy-D-xylulose 5-phosphate = [ThiS sulfur-carrier protein]-C-terminal Gly-Gly + 2-[(2R,5Z)-2-carboxy-4-methylthiazol-5(2H)-ylidene]ethyl phosphate + 2 H2O + H(+). It functions in the pathway cofactor biosynthesis; thiamine diphosphate biosynthesis. In terms of biological role, catalyzes the rearrangement of 1-deoxy-D-xylulose 5-phosphate (DXP) to produce the thiazole phosphate moiety of thiamine. Sulfur is provided by the thiocarboxylate moiety of the carrier protein ThiS. In vitro, sulfur can be provided by H(2)S. This is Thiazole synthase from Brucella anthropi (strain ATCC 49188 / DSM 6882 / CCUG 24695 / JCM 21032 / LMG 3331 / NBRC 15819 / NCTC 12168 / Alc 37) (Ochrobactrum anthropi).